Reading from the N-terminus, the 101-residue chain is Biogenesis of lysosome-related organelles complex 1 subunit SNN1 (101 aa).

Residues 62–100 (DSNEYKAQFKEVNNLQKRLQKITLRLKDLERRSSQLTTS) are a coiled coil.

It belongs to the SNAPIN family. Component of the biogenesis of lysosome-related organelles complex-1 (BLOC-1).

The protein resides in the endosome. In terms of biological role, component of the biogenesis of lysosome-related organelles complex-1 (BLOC-1), a complex involved in endosomal cargo sorting. The polypeptide is Biogenesis of lysosome-related organelles complex 1 subunit SNN1 (SNN1) (Candida glabrata (strain ATCC 2001 / BCRC 20586 / JCM 3761 / NBRC 0622 / NRRL Y-65 / CBS 138) (Yeast)).